A 228-amino-acid chain; its full sequence is Thymidine kinase (228 aa).

23 to 30 serves as a coordination point for ATP; sequence GNIGCGKS. The Proton acceptor role is filled by glutamate 50. Tyrosine 68, glutamine 79, and phenylalanine 109 together coordinate substrate. Residue arginine 157 coordinates ATP.

This sequence belongs to the DCK/DGK family.

The enzyme catalyses thymidine + ATP = dTMP + ADP + H(+). This is Thymidine kinase (TK) from Ictaluridae (bullhead catfishes).